Here is a 266-residue protein sequence, read N- to C-terminus: Undecaprenyl-diphosphatase (266 aa).

Transmembrane regions (helical) follow at residues 1 to 21 (MDTF…FLPI), 39 to 59 (QGLS…VMYF), 87 to 107 (WWII…KDFI), 111 to 131 (FRSI…LWWA), 144 to 164 (VGWK…IPGT), 183 to 203 (AAAR…AILV), 218 to 238 (ALGL…HYFL), and 246 to 266 (MTPF…IIFL).

Belongs to the UppP family.

It is found in the cell inner membrane. It catalyses the reaction di-trans,octa-cis-undecaprenyl diphosphate + H2O = di-trans,octa-cis-undecaprenyl phosphate + phosphate + H(+). Its function is as follows. Catalyzes the dephosphorylation of undecaprenyl diphosphate (UPP). Confers resistance to bacitracin. This Shewanella pealeana (strain ATCC 700345 / ANG-SQ1) protein is Undecaprenyl-diphosphatase.